The primary structure comprises 56 residues: Ovomucoid (56 aa).

The Kazal-like domain occupies 6 to 56 (VDCSEYPKPDCTLEYRPLCGSDNKTYANKCNFCNAVVESNGTLTLSHFGKC). 3 disulfides stabilise this stretch: cysteine 8–cysteine 38, cysteine 16–cysteine 35, and cysteine 24–cysteine 56. An N-linked (GlcNAc...) asparagine glycan is attached at asparagine 45.

It localises to the secreted. In Callipepla squamata castanogastris (Chestnut bellied scaled quail), this protein is Ovomucoid.